The primary structure comprises 302 residues: Nucleotide-binding protein SERP0433 (302 aa).

ATP is bound at residue 18–25; that stretch reads GMSGAGKS. 69 to 72 serves as a coordination point for GTP; that stretch reads DLRG.

Belongs to the RapZ-like family.

Functionally, displays ATPase and GTPase activities. The protein is Nucleotide-binding protein SERP0433 of Staphylococcus epidermidis (strain ATCC 35984 / DSM 28319 / BCRC 17069 / CCUG 31568 / BM 3577 / RP62A).